The following is a 459-amino-acid chain: Peptidyl-prolyl cis-trans isomerase FKBP4 (459 aa).

N-acetylmethionine; in peptidyl-prolyl cis-trans isomerase FKBP4; alternate is present on Met1. Residues 1-24 (MTAEEMKATESGAQSAPLPMEGVD) form a disordered region. Thr2 carries the N-acetylthreonine; in peptidyl-prolyl cis-trans isomerase FKBP4, N-terminally processed; partial modification. Residues 50 to 138 (GDRVFVHYTG…VFEVELFEFK (89 aa)) enclose the PPIase FKBP-type 1 domain. Thr143 carries the post-translational modification Phosphothreonine; by CK2. Positions 167-253 (GAIVEVALEG…KYELHLKSFE (87 aa)) constitute a PPIase FKBP-type 2 domain. Tyr220 is subject to Phosphotyrosine. Positions 267 to 400 (LEQSTIVKER…TQLAVCQQRI (134 aa)) are interaction with tubulin. TPR repeat units follow at residues 270–303 (STIV…LEYE), 319–352 (LASH…DSNN), and 353–386 (EKGL…YPNN). Lys282 is modified (N6-acetyllysine). Arg373 carries the post-translational modification Omega-N-methylarginine. A disordered region spans residues 421-459 (EENKAKAEASSGDHPTDTEMKEEQKSNTAGSQSQVETEA). The span at 434–445 (HPTDTEMKEEQK) shows a compositional bias: basic and acidic residues. A Phosphothreonine modification is found at Thr436. Lys441 participates in a covalent cross-link: Glycyl lysine isopeptide (Lys-Gly) (interchain with G-Cter in SUMO1). Polar residues predominate over residues 446-459 (SNTAGSQSQVETEA). 2 positions are modified to phosphoserine: Ser451 and Ser453.

In terms of assembly, homodimer. Interacts with GLMN. Associates with HSP90AA1 and HSP70 in steroid hormone receptor complexes. Also interacts with peroxisomal phytanoyl-CoA alpha-hydroxylase (PHYH). Interacts with NR3C1 and dynein. Interacts with HSF1 in the HSP90 complex. Associates with tubulin. Interacts with MAPT/TAU. Interacts (via TPR domain) with S100A1, S100A2 and S100A6; the interaction is Ca(2+) dependent. Interaction with S100A1 and S100A2 (but not with S100A6) leads to inhibition of FKBP4-HSP90 interaction. Interacts with dynein; causes partially NR3C1 transport to the nucleus. Post-translationally, phosphorylation by CK2 results in loss of HSP90 binding activity. In terms of tissue distribution, widely expressed.

Its subcellular location is the cytoplasm. The protein localises to the cytosol. The protein resides in the mitochondrion. It is found in the nucleus. It localises to the cytoskeleton. Its subcellular location is the cell projection. The protein localises to the axon. The catalysed reaction is [protein]-peptidylproline (omega=180) = [protein]-peptidylproline (omega=0). Its activity is regulated as follows. Inhibited by FK506. Functionally, immunophilin protein with PPIase and co-chaperone activities. Component of steroid receptors heterocomplexes through interaction with heat-shock protein 90 (HSP90). May play a role in the intracellular trafficking of heterooligomeric forms of steroid hormone receptors between cytoplasm and nuclear compartments. The isomerase activity controls neuronal growth cones via regulation of TRPC1 channel opening. Also acts as a regulator of microtubule dynamics by inhibiting MAPT/TAU ability to promote microtubule assembly. May have a protective role against oxidative stress in mitochondria. This chain is Peptidyl-prolyl cis-trans isomerase FKBP4 (FKBP4), found in Homo sapiens (Human).